Consider the following 337-residue polypeptide: Large ribosomal subunit protein uL3 (337 aa).

The segment at M1–S29 is disordered.

It belongs to the universal ribosomal protein uL3 family. In terms of assembly, part of the 50S ribosomal subunit. Forms a cluster with proteins L14 and L24e.

In terms of biological role, one of the primary rRNA binding proteins, it binds directly near the 3'-end of the 23S rRNA, where it nucleates assembly of the 50S subunit. The protein is Large ribosomal subunit protein uL3 of Methanothermobacter thermautotrophicus (strain ATCC 29096 / DSM 1053 / JCM 10044 / NBRC 100330 / Delta H) (Methanobacterium thermoautotrophicum).